The following is a 121-amino-acid chain: MILSLNSPNVAVPTAKYIRMSPSKIQRVLNQIRGKSYKESLMILEFMPYAACKPVLQAVQSAGANAQHNKGINKNDLVVSLASVDNGPVLRRFRPRAQGRGFKIQKFTSHIRIGVQKQVNF.

The protein belongs to the universal ribosomal protein uL22 family. As to quaternary structure, part of the 50S ribosomal subunit.

The protein resides in the plastid. It is found in the chloroplast. Functionally, this protein binds specifically to 23S rRNA. The globular domain of the protein is located near the polypeptide exit tunnel on the outside of the subunit, while an extended beta-hairpin is found that lines the wall of the exit tunnel in the center of the 70S ribosome. The polypeptide is Large ribosomal subunit protein uL22c (rpl22) (Guillardia theta (Cryptophyte)).